Reading from the N-terminus, the 134-residue chain is UPF0412 protein YaaI (134 aa).

The N-terminal stretch at 1–23 is a signal peptide; it reads MKSVFTLSASLAISLLLCCTAQA.

It belongs to the UPF0412 family.

The chain is UPF0412 protein YaaI from Escherichia coli (strain SMS-3-5 / SECEC).